Consider the following 290-residue polypeptide: Ribonuclease 3 (290 aa).

The RNase III domain occupies Tyr20–Gly145. Glu62 lines the Mg(2+) pocket. Asp66 is an active-site residue. 2 residues coordinate Mg(2+): Asn131 and Glu134. Residue Glu134 is part of the active site. Residues Asn173–Gly242 form the DRBM domain. Residues Lys254–Val290 are disordered. Over residues Glu267 to Ile279 the composition is skewed to polar residues.

This sequence belongs to the ribonuclease III family. In terms of assembly, homodimer. The cofactor is Mg(2+).

The protein resides in the cytoplasm. It carries out the reaction Endonucleolytic cleavage to 5'-phosphomonoester.. Digests double-stranded RNA. Involved in the processing of primary rRNA transcript to yield the immediate precursors to the large and small rRNAs (23S and 16S). Processes some mRNAs, and tRNAs when they are encoded in the rRNA operon. Processes pre-crRNA and tracrRNA of type II CRISPR loci if present in the organism. This is Ribonuclease 3 from Bacteroides fragilis (strain YCH46).